The chain runs to 102 residues: Small ribosomal subunit protein uS14 (102 aa).

It belongs to the universal ribosomal protein uS14 family. In terms of assembly, part of the 30S ribosomal subunit. Contacts proteins S3 and S10.

Its function is as follows. Binds 16S rRNA, required for the assembly of 30S particles and may also be responsible for determining the conformation of the 16S rRNA at the A site. This is Small ribosomal subunit protein uS14 from Ehrlichia ruminantium (strain Gardel).